Consider the following 193-residue polypeptide: Potassium-transporting ATPase KdpC subunit (193 aa).

Residues 7-27 traverse the membrane as a helical segment; the sequence is PLVVIFVVLTAVTGLAYPAVM.

This sequence belongs to the KdpC family. The system is composed of three essential subunits: KdpA, KdpB and KdpC.

The protein localises to the cell inner membrane. Part of the high-affinity ATP-driven potassium transport (or Kdp) system, which catalyzes the hydrolysis of ATP coupled with the electrogenic transport of potassium into the cytoplasm. This subunit acts as a catalytic chaperone that increases the ATP-binding affinity of the ATP-hydrolyzing subunit KdpB by the formation of a transient KdpB/KdpC/ATP ternary complex. This chain is Potassium-transporting ATPase KdpC subunit, found in Burkholderia ambifaria (strain ATCC BAA-244 / DSM 16087 / CCUG 44356 / LMG 19182 / AMMD) (Burkholderia cepacia (strain AMMD)).